Consider the following 491-residue polypeptide: Aspartyl/glutamyl-tRNA(Asn/Gln) amidotransferase subunit B (491 aa).

This sequence belongs to the GatB/GatE family. GatB subfamily. As to quaternary structure, heterotrimer of A, B and C subunits.

It catalyses the reaction L-glutamyl-tRNA(Gln) + L-glutamine + ATP + H2O = L-glutaminyl-tRNA(Gln) + L-glutamate + ADP + phosphate + H(+). It carries out the reaction L-aspartyl-tRNA(Asn) + L-glutamine + ATP + H2O = L-asparaginyl-tRNA(Asn) + L-glutamate + ADP + phosphate + 2 H(+). Its function is as follows. Allows the formation of correctly charged Asn-tRNA(Asn) or Gln-tRNA(Gln) through the transamidation of misacylated Asp-tRNA(Asn) or Glu-tRNA(Gln) in organisms which lack either or both of asparaginyl-tRNA or glutaminyl-tRNA synthetases. The reaction takes place in the presence of glutamine and ATP through an activated phospho-Asp-tRNA(Asn) or phospho-Glu-tRNA(Gln). The sequence is that of Aspartyl/glutamyl-tRNA(Asn/Gln) amidotransferase subunit B from Trichormus variabilis (strain ATCC 29413 / PCC 7937) (Anabaena variabilis).